A 296-amino-acid polypeptide reads, in one-letter code: D-alanine--D-alanine ligase (296 aa).

In terms of domain architecture, ATP-grasp spans 103-293 (KEILMHHRMP…FDSFVKRIIE (191 aa)). ATP is bound at residue 129 to 180 (ISFPAAVKPSSGGSSIATFKVKSIQELKHAYEEASKYGEVMIEQWVTGKEIT). Residues aspartate 247, glutamate 260, and asparagine 262 each contribute to the Mg(2+) site.

The protein belongs to the D-alanine--D-alanine ligase family. Requires Mg(2+) as cofactor. The cofactor is Mn(2+).

It localises to the cytoplasm. The enzyme catalyses 2 D-alanine + ATP = D-alanyl-D-alanine + ADP + phosphate + H(+). It participates in cell wall biogenesis; peptidoglycan biosynthesis. Functionally, cell wall formation. This chain is D-alanine--D-alanine ligase, found in Francisella tularensis subsp. holarctica (strain LVS).